The sequence spans 321 residues: Cysteine and histidine-rich domain-containing protein 1 (321 aa).

Zn(2+)-binding residues include C9, C14, C28, H31, C46, C47, C63, H68, C152, C157, C170, H173, C188, C189, C205, and H210. CHORD domains lie at 9–68 (CYHK…RGKH) and 152–210 (CRNN…SGEH). The CS domain maps to 218–308 (VSKFREDWFS…KHGTGWPRLK (91 aa)).

Its function is as follows. Regulates centrosome duplication. Controls the secretion of the tyrosine kinase receptor let-23/EGFR from the endoplasmic reticulum and is required for the localization of let-23/EGFR to the plasma membrane of vulval precursor cells. It thus plays a role in positively regulating let/EGFR signaling, and anchor cell and vulval precursor cell alignment. Plays a role in vulval development and morphogenesis. In Caenorhabditis elegans, this protein is Cysteine and histidine-rich domain-containing protein 1.